The following is a 329-amino-acid chain: MPEGPSVRKFHHLVSPFVGQKVVKTGGSSKKLHPAAFQSLWLQDAQVHGKKLFLRFDPDEEMEPLNSSPQPIQGMWQKEAVDRELALGPSAQEPSAGPSGSGEPVPSRSAETYNLGKIPSADAQRWLEVRFGLFGSIWVNDFSRAKKANKKGDWRDPVPRLVLHFSGGGFLVFYNCQMSWSPPPVIEPTCDILSEKFHRGQALEALSQAQPVCYTLLDQRYFSGLGNIIKNEALYRARIHPLSLGSCLSSSSREALVDHVVEFSKDWLRDKFQGKERHTQIYQKEQCPSGHQVMKETFGPPDGLQRLTWWCPQCQPQLSSKGPQNLPSS.

The Schiff-base intermediate with DNA role is filled by Pro2. Catalysis depends on Glu3, which acts as the Proton donor. Lys50 (proton donor; for beta-elimination activity) is an active-site residue. Lys50 carries the N6-acetyllysine modification. At Ser68 the chain carries Phosphoserine. The segment at Gly88–Thr112 is disordered. An N6-acetyllysine modification is found at Lys150. Asn227 contributes to the DNA binding site. The FPG-type zinc finger occupies Gln280–Pro316. The active-site Proton donor; for delta-elimination activity is Arg306.

It belongs to the FPG family. In terms of assembly, binds EP300.

Its subcellular location is the nucleus. It catalyses the reaction 2'-deoxyribonucleotide-(2'-deoxyribose 5'-phosphate)-2'-deoxyribonucleotide-DNA = a 3'-end 2'-deoxyribonucleotide-(2,3-dehydro-2,3-deoxyribose 5'-phosphate)-DNA + a 5'-end 5'-phospho-2'-deoxyribonucleoside-DNA + H(+). Acetylation of Lys-50 leads to loss of DNA nicking activity. Its function is as follows. Involved in base excision repair of DNA damaged by oxidation or by mutagenic agents. Has DNA glycosylase activity towards 5-hydroxyuracil and other oxidized derivatives of cytosine with a preference for mismatched double-stranded DNA (DNA bubbles). Has low or no DNA glycosylase activity towards thymine glycol, 2-hydroxyadenine, hypoxanthine and 8-oxoguanine. Has AP (apurinic/apyrimidinic) lyase activity and introduces nicks in the DNA strand. Cleaves the DNA backbone by beta-delta elimination to generate a single-strand break at the site of the removed base with both 3'- and 5'-phosphates. This Mus musculus (Mouse) protein is Endonuclease 8-like 2 (Neil2).